The following is an 844-amino-acid chain: NADPH-Fe(3+) oxidoreductase subunit alpha (844 aa).

The region spanning 1–78 is the 2Fe-2S ferredoxin-type domain; that stretch reads MVSLTIDGKD…GIKVTTQSEK (78 aa). [2Fe-2S] cluster-binding residues include Cys-34, Cys-45, Cys-48, and Cys-62. The 4Fe-4S His(Cys)3-ligated-type domain occupies 78–117; it reads KLSRIRQKIMELMLVNHPLDCPVCDAGGECDLQNACYGLG. Residues His-94, Cys-98, Cys-101, Cys-107, Cys-146, Cys-149, Cys-152, Cys-186, Cys-189, Cys-192, Cys-196, Cys-222, Cys-225, Cys-229, and Cys-256 each coordinate [4Fe-4S] cluster. 2 consecutive 4Fe-4S ferredoxin-type domains span residues 137–168 and 177–206; these read PLIE…IRVV and DTVD…SKPF. One can recognise a 4Fe-4S Mo/W bis-MGD-type domain in the interval 215–270; that stretch reads FTTTPSVCPFCATGCQIEYHSRNGRVERVTSDDSTYNSGNLCINGRFGYSYINSPD.

Heterotetramer with 2 beta subunits. The cofactor is [4Fe-4S] cluster.

It localises to the cell inner membrane. With respect to regulation, not regulated by FAD or FMN. In terms of biological role, the SfrAB enzymatic complex is probably involved in acetate metabolism and does not participate directly in the reduction of Fe(3+) chelates. May serve as a major route for NADP regeneration. The protein is NADPH-Fe(3+) oxidoreductase subunit alpha (sfrA) of Geobacter sulfurreducens (strain DL-1 / KN400).